A 448-amino-acid chain; its full sequence is Protein giant (448 aa).

Disordered stretches follow at residues 23 to 47 (MHHHQYQHHQQQPLHHLPHSQLPVQ), 83 to 134 (QQHQ…ASPT), 238 to 259 (VEATTPTTSSSGEAGKNTRPFK), and 298 to 363 (IRSS…TSSS). Residues 30–47 (HHQQQPLHHLPHSQLPVQ) show a composition bias toward low complexity. Positions 100 to 112 (DLSRRCDSVETPR) are enriched in basic and acidic residues. Residues 115–134 (PSPYQTSYSYGSGSPSASPT) are compositionally biased toward low complexity. Residues 298-310 (IRSSNGGSRTVTN) show a composition bias toward polar residues. Positions 318 to 333 (SRSGSVNEGSSSNNNS) are enriched in low complexity. Positions 384–447 (DAAYYERRRK…AAFTSAKVTT (64 aa)) constitute a bZIP domain. Residues 390–406 (RRRKNNAAAKKSRDRRR) form a basic motif region. Positions 407-414 (IKEDEIAI) are leucine-zipper.

Belongs to the bZIP family. Homodimer or heterodimer. Phosphorylated at multiple sites.

The protein resides in the nucleus. In terms of biological role, represses the expression of both the krueppel and knirps segmentation gap genes. Binds, in vitro, to the krueppel regulatory elements CD1 and CD2. It is required in the early embryo for the development of portions of the head and abdomen. This Drosophila melanogaster (Fruit fly) protein is Protein giant (gt).